The chain runs to 211 residues: Protein 33K (211 aa).

Disordered regions lie at residues 1 to 95 (MPPK…PCSL) and 107 to 140 (AGSP…QDSP). Over residues 24 to 65 (DEEETWDDSQAEEVSDEEAEEQMESWDSLDEEDLEDVEEETI) the composition is skewed to acidic residues. Over residues 83 to 92 (KTIPPLPPQP) the composition is skewed to pro residues. Polar residues predominate over residues 129–140 (TSSAIATRQDSP). Residues 154–181 (YAIFQQSRGQQLELKVKNRSLRSLTRSC) form a necessary for nuclear subcellular location region. Positions 160-180 (SRGQQLELKVKNRSLRSLTRS) are RS-repeat; required for splicing enhancer activity.

The protein belongs to the adenoviridae splicing factor family. Homooligomer. Interacts with DBP; this interaction occurs at a unique vertex during genome packaging. Interacts with IVa2; this interaction occurs at a unique vertex during genome packaging and seems to potentiate IVa2 and 33K oligomerization. In terms of processing, phosphorylated in vitro by human PKA and PRKDC. PRKDC inhibits, whereas PKA activates the splicing factor.

Its subcellular location is the host nucleus. Functionally, promotes alternative splicing of late transcripts by promoting splicing at weak 3' splice sites. Required for the temporal activation of major late pre-mRNA splicing at late times of infection. Induces the splicing and expression of the late capsid vertex protein. Its function is as follows. Probably functions as the small terminase that is part of the molecular motor that translocates genomic DNA in empty capsid during DNA packaging. This motor is located at a unique vertex and comprises at least the IVa2 ATPase, the small terminase 33K and probably a portal. Forms a ring-like structure of about 17 nm in which genomic DNA is translocated into the capsid. Stimulates IVa2 ATPase activity in the presence of the viral genome. Once the DNA is packaged, the terminase detaches: the 33K protein is present in the empty particles, but not in the mature virions. Also involved in virion assembly. This Human adenovirus F serotype 40 (HAdV-40) protein is Protein 33K.